The primary structure comprises 143 residues: Small ribosomal subunit protein bS6 (143 aa).

Residues 100-143 (SPIIKMKDERREVVELTTSGSEDNQKDHHKEDLDKKTDEFSEEN) form a disordered region. Composition is skewed to basic and acidic residues over residues 104–113 (KMKDERREVV) and 122–143 (DNQK…SEEN).

This sequence belongs to the bacterial ribosomal protein bS6 family.

Binds together with bS18 to 16S ribosomal RNA. This chain is Small ribosomal subunit protein bS6, found in Hamiltonella defensa subsp. Acyrthosiphon pisum (strain 5AT).